The sequence spans 289 residues: Xyloglucan endotransglucosylase/hydrolase protein 15 (289 aa).

Residues 1 to 25 (MGPSSSLTTIVATVLLVTLFGSAYA) form the signal peptide. A GH16 domain is found at 26–216 (SNFFDEFDLT…WSKAPFTAYY (191 aa)). Glu102 functions as the Nucleophile in the catalytic mechanism. The active-site Proton donor is Glu106. Glu106 is a xyloglucan binding site. N-linked (GlcNAc...) asparagine glycosylation is present at Asn110. Residues 119 to 121 (HTN), 129 to 131 (DRE), 195 to 196 (DW), and Gly200 contribute to the xyloglucan site. 2 cysteine pairs are disulfide-bonded: Cys224–Cys230 and Cys270–Cys284. Arg275 lines the xyloglucan pocket.

Belongs to the glycosyl hydrolase 16 family. XTH group 2 subfamily. Post-translationally, contains at least one intrachain disulfide bond essential for its enzymatic activity. As to expression, strongly expressed in roots, hypocotyls and cotyledons. Aslo detected in inflorescence stems and in the carpels and styles in flowers.

It is found in the secreted. The protein resides in the cell wall. The protein localises to the extracellular space. It localises to the apoplast. It carries out the reaction breaks a beta-(1-&gt;4) bond in the backbone of a xyloglucan and transfers the xyloglucanyl segment on to O-4 of the non-reducing terminal glucose residue of an acceptor, which can be a xyloglucan or an oligosaccharide of xyloglucan.. The catalysed reaction is xyloglucan + H2O = xyloglucan oligosaccharides.. Catalyzes xyloglucan endohydrolysis (XEH) and/or endotransglycosylation (XET). Cleaves and religates xyloglucan polymers, an essential constituent of the primary cell wall, and thereby participates in cell wall construction of growing tissues. Has a high XET activity, but little or no XEH activity in vitro. Acceptor preferences are XXXGol &gt; XLLGol = XLFGol &gt; XXLGol &gt; XXFGol. The polypeptide is Xyloglucan endotransglucosylase/hydrolase protein 15 (Arabidopsis thaliana (Mouse-ear cress)).